Consider the following 509-residue polypeptide: Cytochrome P450 monooxygenase LUC2 (509 aa).

A helical membrane pass occupies residues 30–50 (TKVLVTFLTIVIIAPRVFTVI). Residue Cys456 participates in heme binding.

Belongs to the cytochrome P450 family. It depends on heme as a cofactor.

It is found in the membrane. Its pathway is mycotoxin biosynthesis. Functionally, cytochrome P450 monooxygenase; part of the gene cluster that mediates the biosynthesis of the mycotoxin lucilactaene and the lucilactaene-related compound NG-391 that act as cell cycle inhibitors with potent growth inhibitory activity against malarial parasites, moderate growth inhibitory activity against cancer cells, and no activity against bacteria and fungi. Within the pathway, LUC2 performs C-20 methyl group hydroxylation of several intermediates. LUC2 does not perform the full oxidation of the C-20 methyl group into carboxylic acid, which is a prerequisite for the final methylation step. The pathway begins with the hybrid PKS-NRPS synthetase LUC5 which is responsible for the condensation of one acetyl-coenzyme A (CoA) unit with six malonyl-CoA units and the amide linkage of the arising heptaketide and homoserine, subsequently releasing the first intermediate prelucilactaene B. Both the cytochrome P450 monooxygenase LUC2 and the hydrolase LUC6 function in parallel in modification of prelucilactaene B. LUC6 may catalyze the 2-pyrrolidone ring formation to form prelucilactaene C from prelucilactaene B, followed by C-15 hydroxylation by the same enzyme to give prelucilactaene D, which is then converted to prelucilactaene E by epoxidation, and finally to prelucilactaene F by cyclization. Prelucilactane D, prelucilactaene E, and prelucilactaene F can be converted to dihydrolucilactaene, NG391, and lucilactaene, respectively, via C-20 methyl group hydroxylation by the cytochrome P450 monooxygenase LUC2. However, LUC2, unlike FUS8 in fusarin C biosynthesis, is not enough for the full oxidation of the C-20 methyl group into carboxylic acid, which is a prerequisite for the final methylation step. The aldehyde dehydrogenase LUC3 is involved in the biosynthesis by further oxidation of the C-20 alcoholic analog prelucilactaene G into a carboxylic derivative. This unidentified carboxylic derivative may be converted to demethyllucilactaene. As the last step, the methyltransferase LUC1 methylates the hydroxyl group at C-21 of demethyllucilactaene to generate lucilactaene. The protein is Cytochrome P450 monooxygenase LUC2 of Fusarium sp.